A 22-amino-acid polypeptide reads, in one-letter code: Mu-conotoxin SxIIIA (22 aa).

3 cysteine pairs are disulfide-bonded: Cys-2-Cys-15, Cys-3-Cys-20, and Cys-10-Cys-21. At Ala-22 the chain carries Alanine amide.

The protein belongs to the conotoxin M superfamily. As to expression, expressed by the venom duct.

The protein localises to the secreted. Mu-conotoxins block voltage-gated sodium channels (Nav). This synthetic toxin potently blocks rNav1.4/SCN4A (IC(50)= 7 nM). It also moderately blocks rNav1.1/SCN1A (IC(50)=370 nM), rNav1.2/SCN2A (IC(50)=1 uM), and mNav1.6/SCN6A (IC(50)=570 nM). It is noteworthy that coexpression of subunits beta-2 or beta-4 (but not beta-1 or beta-3) decrease by more that 10-fold the binding potency of the toxin to rNav1.6. It is also noteworthy that the toxin is 50-fold more potent on mouse Nav1.6 than on rat Nav1.6. In vivo, when injected intraperitoneally or subcutaneously in mice, causes motor impairment, paralysis and death. This chain is Mu-conotoxin SxIIIA, found in Conus striolatus (Cone snail).